Here is a 1439-residue protein sequence, read N- to C-terminus: Fanconi anemia group D2 protein (1439 aa).

K563 participates in a covalent cross-link: Glycyl lysine isopeptide (Lys-Gly) (interchain with G-Cter in ubiquitin).

It belongs to the Fanconi anemia protein FANCD2 family. Homodimer; cannot be ubiquitinated and does not bind DNA. Part of a FANCI-FANCD2 heterodimeric complex that binds and scans dsDNA for DNA damage. Interacts directly with FANCE and FANCI. Interacts with USP1 and MEN1. The ubiquitinated form specifically interacts with BRCA1 and BLM. Both the nonubiquitinated and the monoubiquitinated forms interact with BRCA2; this interaction is mediated by phosphorylated FANCG and the complex also includes XCCR3. The ubiquitinated form specifically interacts with MTMR15/FAN1 (via UBZ-type zinc finger), leading to recruit MTMR15/FAN1 to sites of DNA damage. Interacts with DCLRE1B/Apollo. Interacts with POLN. Interacts with UHRF1 and UHRF2; these interactions promote FANCD2 activation. In terms of processing, monoubiquitinated on Lys-563 during S phase and upon genotoxic stress. Deubiquitinated by USP1 as cells enter G2/M, or once DNA repair is completed. Monoubiquitination prevents DNA release from the FANCI-FANCD2 complex. FANCD2 is only ubiquitinated in the FANCI-FANCD2 complex and the monoubiquitination of FANCD2 is promoted by phosphorylation of FANCI. Post-translationally, phosphorylated in response to various genotoxic stresses by ATM and/or ATR.

The protein resides in the nucleus. In terms of biological role, required for maintenance of chromosomal stability. Promotes accurate and efficient pairing of homologs during meiosis. Involved in the repair of DNA double-strand breaks, both by homologous recombination and single-strand annealing. The FANCI-FANCD2 complex binds and scans double-stranded DNA (dsDNA) for DNA damage; this complex stalls at DNA junctions between double-stranded DNA and single-stranded DNA. May participate in S phase and G2 phase checkpoint activation upon DNA damage. Plays a role in preventing breakage and loss of missegregating chromatin at the end of cell division, particularly after replication stress. Required for the targeting, or stabilization, of BLM to non-centromeric abnormal structures induced by replicative stress. Promotes BRCA2/FANCD1 loading onto damaged chromatin. May also be involved in B-cell immunoglobulin isotype switching. The chain is Fanconi anemia group D2 protein from Gallus gallus (Chicken).